The sequence spans 320 residues: Malate dehydrogenase (320 aa).

Residues 10-15 (GSGMIG) and Asp-34 each bind NAD(+). Residues Arg-83 and Arg-89 each coordinate substrate. NAD(+)-binding positions include Asn-96 and 119-121 (ITN). Residues Asn-121 and Arg-152 each contribute to the substrate site. His-176 (proton acceptor) is an active-site residue.

This sequence belongs to the LDH/MDH superfamily. MDH type 3 family.

It catalyses the reaction (S)-malate + NAD(+) = oxaloacetate + NADH + H(+). In terms of biological role, catalyzes the reversible oxidation of malate to oxaloacetate. The protein is Malate dehydrogenase of Hyphomonas neptunium (strain ATCC 15444).